Consider the following 380-residue polypeptide: Phosphate acyltransferase (380 aa).

A disordered region spans residues 1–23 (MPSPPPTPETATASDRTATPAPG).

It belongs to the PlsX family. Homodimer. Probably interacts with PlsY.

It localises to the cytoplasm. The catalysed reaction is a fatty acyl-[ACP] + phosphate = an acyl phosphate + holo-[ACP]. Its pathway is lipid metabolism; phospholipid metabolism. Catalyzes the reversible formation of acyl-phosphate (acyl-PO(4)) from acyl-[acyl-carrier-protein] (acyl-ACP). This enzyme utilizes acyl-ACP as fatty acyl donor, but not acyl-CoA. The protein is Phosphate acyltransferase of Acidiphilium cryptum (strain JF-5).